We begin with the raw amino-acid sequence, 91 residues long: Small nuclear ribonucleoprotein F (91 aa).

The Sm domain occupies 8-81; it reads APKPFLYDLK…VLFVRGIDDE (74 aa).

The protein belongs to the snRNP Sm proteins family. SmF/LSm6 subfamily. Core component of the spliceosomal U1, U2, U4 and U5 small nuclear ribonucleoproteins (snRNPs), the building blocks of the spliceosome. Most spliceosomal snRNPs contain a common set of Sm proteins, SNRPB, SNRPD1, SNRPD2, SNRPD3, SNRPE, SNRPF and SNRPG that assemble in a heptameric protein ring on the Sm site of the small nuclear RNA to form the core snRNP. Component of the U1 snRNP. Component of the U4/U6-U5 tri-snRNP complex. Component of the U7 snRNP complex. Component of the U11/U12 snRNPs that are part of the U12-type spliceosome. Part of the SMN-Sm complex that catalyzes core snRNPs assembly.

The protein localises to the cytoplasm. Its subcellular location is the cytosol. It is found in the nucleus. Its function is as follows. Plays a role in pre-mRNA splicing as a core component of the spliceosomal U1, U2, U4 and U5 small nuclear ribonucleoproteins (snRNPs), the building blocks of the spliceosome. Component of both the pre-catalytic spliceosome B complex and activated spliceosome C complexes. Is also a component of the minor U12 spliceosome. The chain is Small nuclear ribonucleoprotein F (snrpf) from Dictyostelium discoideum (Social amoeba).